Consider the following 329-residue polypeptide: Nitrogenase iron-iron protein beta chain (329 aa).

The [8Fe-7S] cluster site is built by cysteine 20, cysteine 45, cysteine 104, and serine 143. Positions 213-288 (SADGSLVSHG…EEGDGKPIPQ (76 aa)) are disordered. Residues 257–271 (RSRRSSARPRSHPQY) are compositionally biased toward basic residues.

The protein belongs to the NifD/NifK/NifE/NifN family. Hexamer of two alpha, two beta, and two delta chains. [8Fe-7S] cluster is required as a cofactor.

It catalyses the reaction N2 + 8 reduced [2Fe-2S]-[ferredoxin] + 16 ATP + 16 H2O = H2 + 8 oxidized [2Fe-2S]-[ferredoxin] + 2 NH4(+) + 16 ADP + 16 phosphate + 6 H(+). Its function is as follows. This iron-iron protein is part of the nitrogenase complex that catalyzes the key enzymatic reactions in nitrogen fixation. Other nitrogenase complexes utilize a molybdenum-iron protein or a vanadium-iron protein. This Ruminiclostridium hungatei (Clostridium hungatei) protein is Nitrogenase iron-iron protein beta chain (anfK).